The sequence spans 368 residues: Protein-glutamate methylesterase/protein-glutamine glutaminase 1 (368 aa).

In terms of domain architecture, Response regulatory spans 4–121 (KVLVVDDSGF…SRNPDKVRQL (118 aa)). Aspartate 55 carries the 4-aspartylphosphate modification. Residues 138 to 176 (SLPPLPSATSSSHAPASSSSVGASARVGAGASPAPASTS) form a disordered region. The segment covering 144–176 (SATSSSHAPASSSSVGASARVGAGASPAPASTS) has biased composition (low complexity). The CheB-type methylesterase domain maps to 172–368 (PASTSAAPKR…IGRHLVEACQ (197 aa)). Catalysis depends on residues serine 192, histidine 219, and aspartate 312.

It belongs to the CheB family. In terms of processing, phosphorylated by CheA. Phosphorylation of the N-terminal regulatory domain activates the methylesterase activity.

It localises to the cytoplasm. It catalyses the reaction [protein]-L-glutamate 5-O-methyl ester + H2O = L-glutamyl-[protein] + methanol + H(+). The catalysed reaction is L-glutaminyl-[protein] + H2O = L-glutamyl-[protein] + NH4(+). Functionally, involved in chemotaxis. Part of a chemotaxis signal transduction system that modulates chemotaxis in response to various stimuli. Catalyzes the demethylation of specific methylglutamate residues introduced into the chemoreceptors (methyl-accepting chemotaxis proteins or MCP) by CheR. Also mediates the irreversible deamidation of specific glutamine residues to glutamic acid. This is Protein-glutamate methylesterase/protein-glutamine glutaminase 1 from Pseudomonas aeruginosa (strain ATCC 15692 / DSM 22644 / CIP 104116 / JCM 14847 / LMG 12228 / 1C / PRS 101 / PAO1).